A 354-amino-acid polypeptide reads, in one-letter code: 2-methylisoborneol synthase (354 aa).

Positions 1–29 (MIELIGHETPVPSQQQHTGGVRGTSACTP) are disordered. 6 residues coordinate Mg(2+): Asp113, Asp114, Glu118, Asn264, Ser268, and Glu272.

It belongs to the terpene synthase family. 2-methylisoborneol synthase subfamily. Requires Mg(2+) as cofactor.

It carries out the reaction (E)-2-methylgeranyl diphosphate + H2O = 2-methylisoborneol + diphosphate. Catalyzes the cyclization of 2-methylgeranyl diphosphate (2-MeGPP) to 2-methylisoborneol (2-MIB), which likely involves the intermediacy of 2-methyllinalyl diphosphate. This Saccharopolyspora erythraea (strain ATCC 11635 / DSM 40517 / JCM 4748 / NBRC 13426 / NCIMB 8594 / NRRL 2338) protein is 2-methylisoborneol synthase.